Here is a 461-residue protein sequence, read N- to C-terminus: MLQLLLSVERPVTVLGAGLAGTEAAWQVARAGIPVTIVEMRPMRRSPAHHSSDFAELVCSNSFGALSSDRAAGLLQEEMRRLGSLVIETADAHAVPAGGALAVDRGRYSAALTEALDQHPLVTIERREQQALPGDDQITVLATGPLTSEPLAEDLRAFTGRSDCHFFDAASPIVHGDSIDLNVAFRASRYDKGDADYINCPMDKEQYLAFREALLTAEQAELKDFDKNDATFFEGCLPIEELARRGEDTMRYGPLKPIGLWDPRWGDVNDRDVRRAKRAYAVVQLRQEDKDGRLWNLVGFQTNLKWGEQKRVLQMIPGLAEAEFVRFGVMHRNTFLESPQLLEPTLQFRSRSSLLAAGQITGTEGYAAAVAGGWLAGTNAARLARGLAPIDLPATCMSGALTHFVSEAPTAKFQPMPPNFGLLPELPERIRDKRARYGAYRDRALRDLERIKALTPNALVA.

Position 16-21 (16-21) interacts with FAD; sequence GAGLAG.

The protein belongs to the MnmG family. TrmFO subfamily. The cofactor is FAD.

The protein localises to the cytoplasm. The enzyme catalyses uridine(54) in tRNA + (6R)-5,10-methylene-5,6,7,8-tetrahydrofolate + NADH + H(+) = 5-methyluridine(54) in tRNA + (6S)-5,6,7,8-tetrahydrofolate + NAD(+). The catalysed reaction is uridine(54) in tRNA + (6R)-5,10-methylene-5,6,7,8-tetrahydrofolate + NADPH + H(+) = 5-methyluridine(54) in tRNA + (6S)-5,6,7,8-tetrahydrofolate + NADP(+). Its function is as follows. Catalyzes the folate-dependent formation of 5-methyl-uridine at position 54 (M-5-U54) in all tRNAs. In Parasynechococcus marenigrum (strain WH8102), this protein is Methylenetetrahydrofolate--tRNA-(uracil-5-)-methyltransferase TrmFO.